Reading from the N-terminus, the 570-residue chain is NADPH oxidase 2 (570 aa).

Over 2 to 9 (GNWAVNEG) the chain is Cytoplasmic. Residues 10 to 36 (LSIFVILVWLGLNVFLFVWYYRVYDIP) form a helical membrane-spanning segment. Residues 37–46 (PKFFYTRKLL) lie on the Extracellular side of the membrane. A helical transmembrane segment spans residues 47-72 (GSALALARAPAACLNFNCMLILLPVC). The 233-residue stretch at 54-286 (RAPAACLNFN…MFLYLCERLV (233 aa)) folds into the Ferric oxidoreductase domain. Over 73-95 (RNLLSFLRGSSACCSTRVRRQLD) the chain is Cytoplasmic. A helical transmembrane segment spans residues 96–130 (RNLTFHKMVAWMIALHSAIHTIAHLFNVEWCVNAR). His101 and His115 together coordinate heme b. The Extracellular portion of the chain corresponds to 131 to 163 (VNNSDPYSVALSELGDRQNESYLNFARKRIKNP). Asn132 and Asn149 each carry an N-linked (GlcNAc...) asparagine glycan. Lys161 participates in a covalent cross-link: Glycyl lysine isopeptide (Lys-Gly) (interchain with G-Cter in ubiquitin). Residues 164–194 (EGGLYLAVTLLAGITGVVITLCLILIITSST) form a helical membrane-spanning segment. The Cytoplasmic segment spans residues 195 to 203 (KTIRRSYFE). Positions 199 and 200 each coordinate FAD. Residues 204–222 (VFWYTHHLFVIFFIGLAIH) traverse the membrane as a helical segment. The heme b site is built by Trp206, His209, His222, Arg226, and Ile227. The Extracellular segment spans residues 223-267 (GAERIVRGQTAESLAVHNITVCEQKISEWGKIKECPIPQFAGNPP). Asn240 carries N-linked (GlcNAc...) asparagine glycosylation. Lys255 is covalently cross-linked (Glycyl lysine isopeptide (Lys-Gly) (interchain with G-Cter in ubiquitin)). Heme b-binding residues include Met268, Tyr280, and Arg287. Residues 268-285 (MTWKWIVGPMFLYLCERL) traverse the membrane as a helical segment. At 286–570 (VRFWRSQQKV…VHFIFNKENF (285 aa)) the chain is on the cytoplasmic side. One can recognise an FAD-binding FR-type domain in the interval 287–397 (RFWRSQQKVV…DGPFGTASED (111 aa)). Glycyl lysine isopeptide (Lys-Gly) (interchain with G-Cter in ubiquitin) cross-links involve residues Lys294, Lys299, Lys306, Lys328, and Lys334. The FAD site is built by Trp337, His338, Pro339, Thr341, His354, Arg356, Trp361, and Thr362. Residue Lys381 forms a Glycyl lysine isopeptide (Lys-Gly) (interchain with G-Cter in ubiquitin) linkage. NADPH is bound by residues Ile411, Arg446, and Thr481. Residue Lys506 forms a Glycyl lysine isopeptide (Lys-Gly) (interchain with G-Cter in ubiquitin) linkage. Arg513 is an NADPH binding site. Residue Lys567 forms a Glycyl lysine isopeptide (Lys-Gly) (interchain with G-Cter in ubiquitin) linkage.

Component of the phagocyte NADPH oxidase core complex/cytochrome b558 complex, composed of CYBB (heavy chain (beta)) and CYBA (light chain (alpha)). Component of the phagocyte NADPH oxidase complex composed of an obligatory core heterodimer formed by the membrane proteins CYBA and CYBB and the cytosolic regulatory subunits NCF1/p47-phox, NCF2/p67-phox, NCF4/p40-phox and the small GTPase RAC1 or RAC2. Interacts with NCF1 (phosphorylated form). Interacts with NCF2; the interaction is enhanced in the presence of GBP7. Interacts with RAC2. Interacts with RAC1. Interacts with calprotectin (S100A8/9). Interacts with NRROS; the interaction is direct and impairs formation of a stable NADPH oxidase complex. Interacts with CYBC1; CYBC1 may act as a chaperone stabilizing Cytochrome b-245 heterodimer. The CYBA-CYBB complex interacts with GBP7. FAD serves as cofactor. Post-translationally, glycosylated. Phosphorylated on Ser and Thr residues by PKC during neutrophils activation. Phosphorylation enhances the NADPH oxidase activity and stimulates its interaction with RAC2, NCF2/p67-phox, and NCF1/p47-phox. In terms of processing, undergoes 'Lys-48'-linked polyubiquitination, likely by RNF145, triggering endoplasmic reticulum-associated degradation. As to expression, detected in neutrophils (at protein level).

The protein localises to the cell membrane. The enzyme catalyses NADPH + 2 O2 = 2 superoxide + NADP(+) + H(+). Catalytic subunit of the phagocyte NADPH oxidase complex that mediates the transfer of electrons from cytosolic NADPH to O2 to produce the superoxide anion (O2(-)). In the activated complex, electrons are first transferred from NADPH to flavin adenine dinucleotide (FAD) and subsequently transferred via two heme molecules to molecular oxygen, producing superoxide through an outer-sphere reaction. Activation of the NADPH oxidase complex is initiated by the assembly of cytosolic subunits of the NADPH oxidase complex with the core NADPH oxidase complex to form a complex at the plasma membrane or phagosomal membrane. This activation process is initiated by phosphorylation dependent binding of the cytosolic NCF1/p47-phox subunit to the C-terminus of CYBA/p22-phox. NADPH oxidase complex assembly is impaired through interaction with NRROS. The chain is NADPH oxidase 2 from Homo sapiens (Human).